A 389-amino-acid polypeptide reads, in one-letter code: MDTAGFVSRLLRNPAEAEVDRFLQTRSGKQMVQLFRLIPEPAAQAALTARLLLLAPQVMSGRHRFVAPEKAKKALNAFVGFRCYYISIPHFKSWPMKKLSNLIGLLWETDPNKSLWSLMTKAWSAIRDQIGKDRAPLDQFFSLICPHLNMPAPESYLAVLGWSVSINEEGDPTISHDGSSRSACVGAGLSDTALSVQDIIAYVQSMGYASTYVADVNTTSPTFLGHSVTSTAEKSNLAGAATPAVAPATDRRITARNKRRAKRELAKVTGLRANLEQDILNAHRVDPGRAGEYMPDHYPTPAAVNYDPIPFYDQLVGYFDSPIPNFQDDAAMSSGATLIDATPVSDDTLHGEMDDIVSNAAFFQSDFDAFRSGANEDATLPTFDDVFNA.

Positions 70–127 (KAKKALNAFVGFRCYYISIPHFKSWPMKKLSNLIGLLWETDPNKSLWSLMTKAWSAIR) form a DNA-binding region, alpha box.

This sequence belongs to the MATALPHA1 family.

The protein localises to the nucleus. Functionally, mating type proteins are sequence specific DNA-binding proteins that act as master switches in fungal differentiation by controlling gene expression in a cell type-specific fashion. Transcriptional activator that induces the transcription of alpha-specific genes. The chain is Mating-type protein MAT-1 (MAT1) from Alternaria alternata (Alternaria rot fungus).